The sequence spans 429 residues: GTPase Obg (429 aa).

One can recognise an Obg domain in the interval 1–158 (MFVDHVKIYV…LNVILELKVL (158 aa)). The tract at residues 119-143 (AGRGGRGNSRFATPANPAPELSEKG) is disordered. One can recognise an OBG-type G domain in the interval 159-329 (ADVGLVGFPS…LLFAIADLLE (171 aa)). GTP is bound by residues 165-172 (GFPSVGKS), 190-194 (FTTIV), 212-215 (DLPG), 282-285 (NKMD), and 310-312 (SAV). Ser172 and Thr192 together coordinate Mg(2+). Residues 351–429 (KHEAKGEDFE…LQEFEFEFVD (79 aa)) form the OCT domain.

It belongs to the TRAFAC class OBG-HflX-like GTPase superfamily. OBG GTPase family. Monomer. It depends on Mg(2+) as a cofactor.

The protein resides in the cytoplasm. Functionally, an essential GTPase which binds GTP, GDP and possibly (p)ppGpp with moderate affinity, with high nucleotide exchange rates and a fairly low GTP hydrolysis rate. Plays a role in control of the cell cycle, stress response, ribosome biogenesis and in those bacteria that undergo differentiation, in morphogenesis control. This Lysinibacillus sphaericus (strain C3-41) protein is GTPase Obg.